Here is a 579-residue protein sequence, read N- to C-terminus: Pre-mRNA-processing factor 17 (579 aa).

Residues 1–19 (MSAAIAALAASYGSGSGSE) show a composition bias toward low complexity. Disordered stretches follow at residues 1–47 (MSAA…PSSK) and 204–237 (DVAK…PGEE). Ser-46 carries the post-translational modification Phosphoserine. 7 WD repeats span residues 286-326 (GHTK…RCLR), 330-369 (GHSK…CISR), 371-413 (TNRK…IVQE), 416-455 (RHLG…DFKY), 459-498 (PSMH…RLNK), 504-545 (GHMV…LYSR), and 548-578 (AHDK…IKLW).

In terms of assembly, component of the pre-catalytic and catalytic spliceosome complexes. Component of the postcatalytic spliceosome P complex. Interacts with PPIL1; this interaction leads to CDC40 isomerization. Post-translationally, undergoes isomerization of the peptide bond between Gly-94 and Pro-95. The reaction is catalyzed by PPIL1.

It is found in the nucleus. Its subcellular location is the nucleus speckle. Its function is as follows. Required for pre-mRNA splicing as component of the activated spliceosome. Plays an important role in embryonic brain development; this function does not require proline isomerization. This is Pre-mRNA-processing factor 17 (CDC40) from Homo sapiens (Human).